We begin with the raw amino-acid sequence, 628 residues long: tRNA uridine 5-carboxymethylaminomethyl modification enzyme MnmG (628 aa).

FAD is bound at residue G13–G18. NAD(+) is bound at residue G273–F287.

This sequence belongs to the MnmG family. In terms of assembly, homodimer. Heterotetramer of two MnmE and two MnmG subunits. The cofactor is FAD.

The protein localises to the cytoplasm. NAD-binding protein involved in the addition of a carboxymethylaminomethyl (cmnm) group at the wobble position (U34) of certain tRNAs, forming tRNA-cmnm(5)s(2)U34. The chain is tRNA uridine 5-carboxymethylaminomethyl modification enzyme MnmG from Buchnera aphidicola subsp. Acyrthosiphon pisum (strain 5A).